The following is a 505-amino-acid chain: RNA-splicing ligase RtcB homolog (505 aa).

Asp119, Cys122, His227, His259, and His353 together coordinate Mn(2+). Position 226-230 (226-230 (NHYGE)) interacts with GMP. GMP contacts are provided by residues 353–354 (HN), 402–405 (GGTM), Ser409, 428–431 (HGAG), and Lys504. Residue His428 is the GMP-histidine intermediate of the active site.

Belongs to the RtcB family. As to quaternary structure, catalytic component of the tRNA-splicing ligase complex. Mn(2+) is required as a cofactor.

The enzyme catalyses a 3'-end 3'-phospho-ribonucleotide-RNA + a 5'-end dephospho-ribonucleoside-RNA + GTP = a ribonucleotidyl-ribonucleotide-RNA + GMP + diphosphate. The catalysed reaction is a 3'-end 2',3'-cyclophospho-ribonucleotide-RNA + a 5'-end dephospho-ribonucleoside-RNA + GTP + H2O = a ribonucleotidyl-ribonucleotide-RNA + GMP + diphosphate + H(+). In terms of biological role, catalytic subunit of the tRNA-splicing ligase complex that acts by directly joining spliced tRNA halves to mature-sized tRNAs by incorporating the precursor-derived splice junction phosphate into the mature tRNA as a canonical 3',5'-phosphodiester. May act as an RNA ligase with broad substrate specificity, and may function toward other RNAs. The polypeptide is RNA-splicing ligase RtcB homolog (Brugia malayi (Filarial nematode worm)).